The chain runs to 172 residues: Myosin regulatory light chain 2, smooth muscle major isoform (172 aa).

Positions 1–16 (MSSKRAKAKTTKKRPQ) are enriched in basic residues. The tract at residues 1–20 (MSSKRAKAKTTKKRPQRATS) is disordered. At serine 2 the chain carries N-acetylserine. EF-hand domains lie at 29–64 (SQIQEFKEAFNMIDQNRDGFIDKEDLHDMLASMGKN), 98–133 (DPEDVIRNAFACFDEEASGFIHEDHLRELLTTMGDR), and 134–169 (FTDEEVDEMYREAPIDKKGNFNYVEFTRILKHGAKD). Residues aspartate 42, asparagine 44, aspartate 46, and aspartate 53 each contribute to the Ca(2+) site.

As to quaternary structure, myosin is a hexamer of 2 heavy chains and 4 light chains.

Myosin regulatory subunit that plays an important role in regulation of both smooth muscle and nonmuscle cell contractile activity. Implicated in cytokinesis, receptor capping, and cell locomotion. This Gallus gallus (Chicken) protein is Myosin regulatory light chain 2, smooth muscle major isoform.